A 362-amino-acid polypeptide reads, in one-letter code: MGTRSTSVSDAVAVLDERSREIFRRIVEGYLESGEPLGSRNLSRLLPMSLSPASVRNVMSDLEELGLIYSPHISAGRLPTQIGLRFFVDAFMQVGDLSAEDRANIDRQVRAESGGNPVESMMNEASRMLSGISRGAGLVITSKSDPVLKHVEFIRLEPTKALAVLVGDHDQVENRIIELPAGVTSSQLTEAANFLNAHMSGQTLPELRKQLSQLKDDVRHELDALSRDLVERGIAVWAGSPDEGKPAQLIIRGRANLLEGLGGAEDLDRLRMLFDDLEKKDSLIEILSLAESGSGVRIFIGSENKLFSLSGSSLIVAPYRDDDDRIVGAVGVIGPTRLNYSRIVPMVDYTAQLVSRLSRNPL.

It belongs to the HrcA family.

Negative regulator of class I heat shock genes (grpE-dnaK-dnaJ and groELS operons). Prevents heat-shock induction of these operons. This chain is Heat-inducible transcription repressor HrcA, found in Rhizobium etli (strain CIAT 652).